Here is a 221-residue protein sequence, read N- to C-terminus: Urease accessory protein UreF (221 aa).

This sequence belongs to the UreF family. As to quaternary structure, ureD, UreF and UreG form a complex that acts as a GTP-hydrolysis-dependent molecular chaperone, activating the urease apoprotein by helping to assemble the nickel containing metallocenter of UreC. The UreE protein probably delivers the nickel.

It is found in the cytoplasm. In terms of biological role, required for maturation of urease via the functional incorporation of the urease nickel metallocenter. This chain is Urease accessory protein UreF, found in Aliivibrio fischeri (strain MJ11) (Vibrio fischeri).